The following is a 161-amino-acid chain: ATP synthase subunit b' (161 aa).

The chain crosses the membrane as a helical span at residues 26–45 (LPLMAIQFLLLAFVLDKIFY).

The protein belongs to the ATPase B chain family. As to quaternary structure, F-type ATPases have 2 components, F(1) - the catalytic core - and F(0) - the membrane proton channel. F(1) has five subunits: alpha(3), beta(3), gamma(1), delta(1), epsilon(1). F(0) has four main subunits: a(1), b(1), b'(1) and c(10-14). The alpha and beta chains form an alternating ring which encloses part of the gamma chain. F(1) is attached to F(0) by a central stalk formed by the gamma and epsilon chains, while a peripheral stalk is formed by the delta, b and b' chains.

The protein resides in the cellular thylakoid membrane. Its function is as follows. F(1)F(0) ATP synthase produces ATP from ADP in the presence of a proton or sodium gradient. F-type ATPases consist of two structural domains, F(1) containing the extramembraneous catalytic core and F(0) containing the membrane proton channel, linked together by a central stalk and a peripheral stalk. During catalysis, ATP synthesis in the catalytic domain of F(1) is coupled via a rotary mechanism of the central stalk subunits to proton translocation. In terms of biological role, component of the F(0) channel, it forms part of the peripheral stalk, linking F(1) to F(0). The b'-subunit is a diverged and duplicated form of b found in plants and photosynthetic bacteria. This Trichodesmium erythraeum (strain IMS101) protein is ATP synthase subunit b'.